Reading from the N-terminus, the 162-residue chain is MTKLTLYPGTFDPITNGHLDLIKRSASMFDHIIVAVAASPSKKTLFTLDERVQLVQAVTKDLPNVYVEGFSGLMVDFAKEKKANLLVRGLRTTMDFEYEFGLTSMYRKLMPELESVFLTPSEEYAFLSSTIVREVALHGGSVEAFVPSSVNQALKNKVASSL.

Thr10 contributes to the substrate binding site. Residues 10–11 (TF) and His18 contribute to the ATP site. Residues Lys42, Met74, and Arg88 each coordinate substrate. ATP contacts are provided by residues 89–91 (GLR), Glu99, and 124–130 (YAFLSST).

The protein belongs to the bacterial CoaD family. Homohexamer. Requires Mg(2+) as cofactor.

It is found in the cytoplasm. It carries out the reaction (R)-4'-phosphopantetheine + ATP + H(+) = 3'-dephospho-CoA + diphosphate. It participates in cofactor biosynthesis; coenzyme A biosynthesis; CoA from (R)-pantothenate: step 4/5. In terms of biological role, reversibly transfers an adenylyl group from ATP to 4'-phosphopantetheine, yielding dephospho-CoA (dPCoA) and pyrophosphate. The chain is Phosphopantetheine adenylyltransferase from Aliivibrio fischeri (strain ATCC 700601 / ES114) (Vibrio fischeri).